The following is a 295-amino-acid chain: Aquaporin-9 (295 aa).

At 1–24 the chain is on the cytoplasmic side; the sequence is MPSEKDGAKKSLMQRLALKSRIAK. The helical transmembrane segment at 25–43 threads the bilayer; that stretch reads ETLSEFLGTFIMIVLGCSS. Topologically, residues 44–57 are extracellular; sequence IAQAVLSRERFGGI. The chain crosses the membrane as a helical span at residues 58–77; sequence ITINIGFASAVVMALYVTFG. The Cytoplasmic portion of the chain corresponds to 78-79; the sequence is IS. Positions 80–92 form an intramembrane region, discontinuously helical; sequence GGHINPAVSFAMC. The NPA 1 motif lies at 84–86; sequence NPA. Over 93 to 98 the chain is Cytoplasmic; that stretch reads AFGRME. The helical transmembrane segment at 99 to 123 threads the bilayer; sequence WFKFPFYVGAQFLGAFVGAATVFGI. The Extracellular portion of the chain corresponds to 124–160; the sequence is YYDGLMAFAGGKLLVVGENATAFIFATYPAPFISTPG. The helical transmembrane segment at 161–178 threads the bilayer; the sequence is AFVDQVVSTMFLLLIVFA. Over 179-190 the chain is Cytoplasmic; the sequence is MFDSRNLGVPRG. Residues 191–207 traverse the membrane as a helical segment; the sequence is LEPVVIGLLIIVLSCSL. The Extracellular portion of the chain corresponds to 208–210; it reads GLN. Positions 211-225 form an intramembrane region, discontinuously helical; that stretch reads SGCAMNPARDLSPRL. The NPA 2 signature appears at 216–218; the sequence is NPA. Topologically, residues 226–243 are extracellular; the sequence is FTALAGWGFEVFTVGNNF. A helical membrane pass occupies residues 244-264; the sequence is WWIPVVGPMIGAFLGGLIYIL. Residues 265–295 lie on the Cytoplasmic side of the membrane; sequence FIQMHHSKLDPDMKAEPSENNLEKHELSVIM.

This sequence belongs to the MIP/aquaporin (TC 1.A.8) family. Homotetramer; each monomer provides an independent glycerol/water pore. Detected in testis and liver. Detected in immature spermatocytes and in interstitial Leydig cells.

It localises to the cell membrane. Its subcellular location is the basolateral cell membrane. It catalyses the reaction H2O(in) = H2O(out). The catalysed reaction is glycerol(in) = glycerol(out). The enzyme catalyses urea(in) = urea(out). It carries out the reaction (S)-lactate(in) = (S)-lactate(out). It catalyses the reaction NH4(+)(in) = NH4(+)(out). The catalysed reaction is uracil(in) = uracil(out). The enzyme catalyses adenine(out) = adenine(in). It carries out the reaction 3-hydroxybutanoate(in) = 3-hydroxybutanoate(out). It catalyses the reaction D-sorbitol(in) = D-sorbitol(out). The catalysed reaction is D-mannitol(in) = D-mannitol(out). The enzyme catalyses H2O2(out) = H2O2(in). It carries out the reaction arsenite(in) = arsenite(out). It catalyses the reaction selenite(in) = selenite(out). With respect to regulation, channel activity is inhibited by mercury ions and phloretin. Its function is as follows. Aquaglyceroporins form homotetrameric transmembrane channels, with each monomer independently mediating glycerol and water transport across the plasma membrane along their osmotic gradient. AQP9 is the primary route for glycerol uptake in hepatocytes, supporting hepatic gluconeogenesis. It exhibits broad specificity and may transport various small, non-charged solutes, including carbamides, polyols, purines, and pyrimidines. AQP9 may also facilitate hepatic urea extrusion. Due to its permeability to lactate, AQP9 might participate in the astrocyte-to-neuron lactate shuttle, supplying neurons with energy. Additionally, AQP9 is permeable to arsenite, contributing to arsenic excretion by the liver and providing partial protection against arsenic toxicity. It is also permeable to H2O2 in vivo. Could also be permeable to ammonium. In Rattus norvegicus (Rat), this protein is Aquaporin-9.